A 468-amino-acid polypeptide reads, in one-letter code: 6-phosphogluconate dehydrogenase, decarboxylating (468 aa).

NADP(+) contacts are provided by residues glycine 10–glycine 15, asparagine 33–serine 35, valine 74–alanine 76, and asparagine 102. Substrate-binding positions include asparagine 102 and serine 128 to glycine 130. Lysine 183 functions as the Proton acceptor in the catalytic mechanism. Histidine 186 to asparagine 187 serves as a coordination point for substrate. Glutamate 190 acts as the Proton donor in catalysis. Substrate contacts are provided by tyrosine 191, lysine 260, arginine 287, arginine 445, and histidine 451.

Belongs to the 6-phosphogluconate dehydrogenase family. Homodimer.

The enzyme catalyses 6-phospho-D-gluconate + NADP(+) = D-ribulose 5-phosphate + CO2 + NADPH. It functions in the pathway carbohydrate degradation; pentose phosphate pathway; D-ribulose 5-phosphate from D-glucose 6-phosphate (oxidative stage): step 3/3. Its function is as follows. Catalyzes the oxidative decarboxylation of 6-phosphogluconate to ribulose 5-phosphate and CO(2), with concomitant reduction of NADP to NADPH. This Shigella flexneri protein is 6-phosphogluconate dehydrogenase, decarboxylating (gnd).